Consider the following 357-residue polypeptide: Peptide chain release factor 1 (357 aa).

Residue Q234 is modified to N5-methylglutamine.

Belongs to the prokaryotic/mitochondrial release factor family. Methylated by PrmC. Methylation increases the termination efficiency of RF1.

Its subcellular location is the cytoplasm. Its function is as follows. Peptide chain release factor 1 directs the termination of translation in response to the peptide chain termination codons UAG and UAA. The chain is Peptide chain release factor 1 from Nocardioides sp. (strain ATCC BAA-499 / JS614).